The sequence spans 106 residues: Probable insulin-like peptide beta-type 1 (106 aa).

Positions 1 to 19 (MFSFFTYFLLSALLLSASC) are cleaved as a signal peptide. Positions 20–51 (RQPSMDTSKADRILREIEMETELENQLSRARR) are cleaved as a propeptide — removed; by convertase egl-3. 4 disulfides stabilise this stretch: Cys60/Cys89, Cys72/Cys102, Cys76/Cys103, and Cys88/Cys93.

This sequence belongs to the insulin family. Expressed by ASI and ASJ sensory neurons and weakly by ventral cord motor neurons.

It localises to the secreted. Probable insulin-like peptide which negatively regulates synapse development at the neuromuscular junctions. Probably acts as a daf-2/InsR agonist ligand to prevent dauer formation under optimal environmental conditions. The chain is Probable insulin-like peptide beta-type 1 (ins-4) from Caenorhabditis elegans.